Reading from the N-terminus, the 668-residue chain is Acetoin catabolism regulatory protein (668 aa).

Positions 341 to 570 (LTGGDAALQL…NVLEYARAVC (230 aa)) constitute a Sigma-54 factor interaction domain. ATP contacts are provided by residues 369 to 376 (GETGSGKE) and 433 to 442 (ADGGTLFLDE). The span at 586–606 (GPAPSAALPQPGPAQSPAAAP) shows a compositional bias: low complexity. A disordered region spans residues 586-611 (GPAPSAALPQPGPAQSPAAAPFDPHQ). The segment at residues 630 to 649 (LSAVARQIGVSRMTLYRRME) is a DNA-binding region (H-T-H motif).

Required for sigma-54-dependent transcription of acoXABC. The polypeptide is Acetoin catabolism regulatory protein (acoR) (Cupriavidus necator (strain ATCC 17699 / DSM 428 / KCTC 22496 / NCIMB 10442 / H16 / Stanier 337) (Ralstonia eutropha)).